A 179-amino-acid polypeptide reads, in one-letter code: Large ribosomal subunit protein uL5 (179 aa).

The protein belongs to the universal ribosomal protein uL5 family. Part of the 50S ribosomal subunit; part of the 5S rRNA/L5/L18/L25 subcomplex. Contacts the 5S rRNA and the P site tRNA. Forms a bridge to the 30S subunit in the 70S ribosome.

Functionally, this is one of the proteins that bind and probably mediate the attachment of the 5S RNA into the large ribosomal subunit, where it forms part of the central protuberance. In the 70S ribosome it contacts protein S13 of the 30S subunit (bridge B1b), connecting the 2 subunits; this bridge is implicated in subunit movement. Contacts the P site tRNA; the 5S rRNA and some of its associated proteins might help stabilize positioning of ribosome-bound tRNAs. This Idiomarina loihiensis (strain ATCC BAA-735 / DSM 15497 / L2-TR) protein is Large ribosomal subunit protein uL5.